The chain runs to 626 residues: Protein MICRORCHIDIA 2 (626 aa).

Residues 579–626 (MRCEEYIKKENETEQTVKSLEKELEEFKSKCAHLALLVDAKKKEMQQA) adopt a coiled-coil conformation.

This sequence belongs to the MORC ATPase protein family. Homodimer and heterodimer with MORC6. Component of an RNA-directed DNA methylation (RdDM) complex that contains at least MORC6, MORC1/CRT1, MORC2, SWI3D and SUVH9. Binds directly to SUVH9. Mg(2+) serves as cofactor. Mn(2+) is required as a cofactor.

The protein resides in the nucleus. It is found in the endosome. Functionally, mediator of defense signaling triggered by distinct classes of R proteins. Required during hypersensitive response (HR) that confers disease resistance to turnip crinkle virus (TCV). Contributes to resistance against Pseudomonas syringae and Hyaloperonospora arabidopsidis, at early stages prior to cytosolic calcium ions Ca(2+) accumulation. Required for pathogen-associated molecular pattern (PAMP)-triggered immunity, basal resistance, non-host resistance and systemic acquired resistance (SAR). Involved in RNA-directed DNA methylation (RdDM) as a component of the RdDM machinery and required for gene silencing. May also be involved in the regulation of chromatin architecture to maintain gene silencing. Exhibits ATPase activity. This chain is Protein MICRORCHIDIA 2, found in Arabidopsis thaliana (Mouse-ear cress).